The following is a 561-amino-acid chain: MNINVADLLNGNYILLLFVVLALGLCLGKLRLGSVQLGNSIGVLVVSLLLGQQHFSINTDALNLGFMLFIFCVGVEAGPNFFSIFFRDGKNYLMLALVMVGSALLIALGLGKLFGWDIGLTVGMLAGSMTSTPVLVGAGDTLRHSGIASTQLSSALDNLSLGYALTYLIGLVSLIVGARYLPKLQHQDLQTSAQQIARERGLDTDANRKVYLPVIRAYRVGPELVAWTDGKNLRELGIYRQTGCYIERIRRNGILANPDGDAVLQMGDEIALVGYPDAHARLDPSFRNGKEVFDRDLLDMRIVTEEIVVKNHNAVGRRLAQLKLTDHGCFLNRVIRSQIEMPIDDNVVLNKGDVLQVSGDARRVKTIADRIGFISIHSQVTDLLAFCAFFIIGLMIGMITFQFSNFSFGIGNAAGLLFAGIMLGFLRANHPTFGYIPQGALNMVKEFGLMVFMAGVGLSAGSGISNGLGAVGGQMLIAGLVVSLVPVVICFLFGAYVLRMNRALLFGAMMGARTCAPAMEIISDTARSNIPALGYAGTYAIANVLLTLAGTLIVIIWPGLG.

Transmembrane regions (helical) follow at residues 8 to 28 (LLNG…LCLG), 32 to 52 (LGSV…LLGQ), 66 to 86 (FMLF…SIFF), 94 to 114 (MLAL…GKLF), and 158 to 178 (NLSL…IVGA). RCK C-terminal domains follow at residues 200–288 (RGLD…SFRN) and 292–373 (VFDR…RIGF). 5 helical membrane-spanning segments follow: residues 383–403 (LLAF…TFQF), 406–426 (FSFG…LGFL), 447–467 (FGLM…ISNG), 475–495 (MLIA…LFGA), and 540–560 (AIAN…WPGL).

The protein belongs to the AAE transporter (TC 2.A.81) family. YbjL subfamily.

It localises to the cell membrane. This is Putative transport protein YbjL from Salmonella dublin (strain CT_02021853).